A 236-amino-acid chain; its full sequence is Biosynthetic peptidoglycan transglycosylase (236 aa).

The chain crosses the membrane as a helical span at residues 12–31 (ALLWFAASSIVLVLVFRWVP).

It belongs to the glycosyltransferase 51 family.

It is found in the cell inner membrane. The enzyme catalyses [GlcNAc-(1-&gt;4)-Mur2Ac(oyl-L-Ala-gamma-D-Glu-L-Lys-D-Ala-D-Ala)](n)-di-trans,octa-cis-undecaprenyl diphosphate + beta-D-GlcNAc-(1-&gt;4)-Mur2Ac(oyl-L-Ala-gamma-D-Glu-L-Lys-D-Ala-D-Ala)-di-trans,octa-cis-undecaprenyl diphosphate = [GlcNAc-(1-&gt;4)-Mur2Ac(oyl-L-Ala-gamma-D-Glu-L-Lys-D-Ala-D-Ala)](n+1)-di-trans,octa-cis-undecaprenyl diphosphate + di-trans,octa-cis-undecaprenyl diphosphate + H(+). The protein operates within cell wall biogenesis; peptidoglycan biosynthesis. In terms of biological role, peptidoglycan polymerase that catalyzes glycan chain elongation from lipid-linked precursors. The protein is Biosynthetic peptidoglycan transglycosylase of Pseudomonas putida (strain GB-1).